The chain runs to 1342 residues: Restriction of telomere capping protein 1 (1342 aa).

The tract at residues 1-39 is disordered; that stretch reads MSLSPHVENASIPKGSTPIPKNRNVSSIGKGEFLGSSSS. 6 WD repeats span residues 207-248, 256-296, 305-342, 367-406, 439-486, and 489-527; these read NKFS…SIDN, EHTR…SKSS, TASD…YKFA, AHTG…NAAE, NTGY…IPKH, and LSET…TVLE. Disordered regions lie at residues 559 to 593, 600 to 619, 630 to 651, 736 to 766, and 788 to 831; these read PELQ…IGGI, TGLT…GPTF, ASSF…ENRE, KNAT…DDDD, and LMNE…DRSR. Residues 630–644 are compositionally biased toward low complexity; it reads ASSFNSSSASLTSLT. Acidic residues predominate over residues 753–766; the sequence is DDGDDDDDDDDDDD. Residues 815–824 show a composition bias toward low complexity; sequence SSISSISASR. The stretch at 844-884 is one WD 7 repeat; the sequence is KIQTLVDLISIATHNASVYLSIDDLTNFKIWILIRDSLLWD. Disordered regions lie at residues 942-962 and 1014-1043; these read AFRA…SKLK and DEHE…AKSI. Basic and acidic residues-rich tracts occupy residues 952–962 and 1016–1028; these read DAEKKPVSKLK and HEHQ…HDSP. A phosphoserine mark is found at serine 1037, serine 1081, serine 1088, serine 1090, serine 1124, and serine 1134. 2 WD repeats span residues 1130–1170 and 1217–1256; these read SRPD…KQLY and LFGI…LITN. The RING-type; degenerate zinc-finger motif lies at 1294-1336; sequence CVLCERPLKKLTMVILPCGHEGHFQCIQEWFLDENEQECPGGC.

It belongs to the WD repeat RTC1 family.

Its subcellular location is the vacuole. In terms of biological role, may be involved in a process influencing telomere capping. The polypeptide is Restriction of telomere capping protein 1 (RTC1) (Saccharomyces cerevisiae (strain Lalvin EC1118 / Prise de mousse) (Baker's yeast)).